Reading from the N-terminus, the 169-residue chain is Large ribosomal subunit protein uL5 (169 aa).

Belongs to the universal ribosomal protein uL5 family. In terms of assembly, part of the 50S ribosomal subunit; contacts the 5S rRNA and probably tRNA. Forms a bridge to the 30S subunit in the 70S ribosome.

This is one of the proteins that bind and probably mediate the attachment of the 5S RNA into the large ribosomal subunit, where it forms part of the central protuberance. In the 70S ribosome it contacts protein S13 of the 30S subunit (bridge B1b), connecting the 2 subunits; this bridge is implicated in subunit movement. May contact the P site tRNA; the 5S rRNA and some of its associated proteins might help stabilize positioning of ribosome-bound tRNAs. This is Large ribosomal subunit protein uL5 from Nanoarchaeum equitans (strain Kin4-M).